The chain runs to 84 residues: Cell division topological specificity factor (84 aa).

It belongs to the MinE family.

Prevents the cell division inhibition by proteins MinC and MinD at internal division sites while permitting inhibition at polar sites. This ensures cell division at the proper site by restricting the formation of a division septum at the midpoint of the long axis of the cell. This Paraburkholderia xenovorans (strain LB400) protein is Cell division topological specificity factor.